The chain runs to 339 residues: Heat stress transcription factor C-1a (339 aa).

Positions 154–217 (EEEDAAEDVL…LAKLADDPNA (64 aa)) form a coiled coil. A hydrophobic repeat HR-A/B region spans residues 176 to 212 (LRHEQTAIGEELARMSQRLQATERRPDQLMSFLAKLA). The segment at 227 to 248 (AERKRRRQHLPSHEPTVCPLPP) is disordered. A Nuclear localization signal motif is present at residues 229-233 (RKRRR).

This sequence belongs to the HSF family. Class C subfamily. As to quaternary structure, homotrimer. In terms of processing, exhibits temperature-dependent phosphorylation.

The protein localises to the nucleus. Its function is as follows. Transcriptional regulator that specifically binds DNA of heat shock promoter elements (HSE). In Oryza sativa subsp. japonica (Rice), this protein is Heat stress transcription factor C-1a (HSFC1A).